The chain runs to 223 residues: UPF0319 protein VPA1584 (223 aa).

The first 21 residues, 1–21, serve as a signal peptide directing secretion; that stretch reads MKLIKPLTCALALAMSGMAFA.

Belongs to the UPF0319 family.

The chain is UPF0319 protein VPA1584 from Vibrio parahaemolyticus serotype O3:K6 (strain RIMD 2210633).